Consider the following 238-residue polypeptide: Probable transcriptional regulatory protein MGAS10750_Spy0264 (238 aa).

This sequence belongs to the TACO1 family. YeeN subfamily.

It localises to the cytoplasm. The protein is Probable transcriptional regulatory protein MGAS10750_Spy0264 of Streptococcus pyogenes serotype M4 (strain MGAS10750).